The primary structure comprises 111 residues: Aquaporin-2 (111 aa).

The Cytoplasmic portion of the chain corresponds to 1-6; the sequence is SIAFSR. Residues 7–27 traverse the membrane as a helical segment; it reads AVFSEFLATLLFVFFGLGSAL. The Extracellular segment spans residues 28–37; sequence NWPSTVPIPT. The chain crosses the membrane as a helical span at residues 38 to 56; it reads VLQISMAFGLAIGTLVQTL. The Cytoplasmic segment spans residues 57 to 61; the sequence is GHISG. An intramembrane region (discontinuously helical) is located at residues 62–71; it reads AHINPAVTVA. Residues 65–67 carry the NPA 1 motif; the sequence is NPA. The Cytoplasmic segment spans residues 72–82; sequence CLVGCHVSFLR. Residues 83-104 form a helical membrane-spanning segment; it reads ATFYVAAQLLGAVAGAALLHKL. At 105–111 the chain is on the extracellular side; sequence TPEDIRG.

Belongs to the MIP/aquaporin (TC 1.A.8) family. As to quaternary structure, homotetramer. In terms of processing, serine phosphorylation is necessary and sufficient for expression at the apical membrane. Endocytosis is not phosphorylation-dependent. Post-translationally, N-glycosylated.

It is found in the apical cell membrane. The protein localises to the basolateral cell membrane. Its subcellular location is the cell membrane. It localises to the cytoplasmic vesicle membrane. The protein resides in the golgi apparatus. It is found in the trans-Golgi network membrane. The enzyme catalyses H2O(in) = H2O(out). The catalysed reaction is glycerol(in) = glycerol(out). Forms a water-specific channel that provides the plasma membranes of renal collecting duct with high permeability to water, thereby permitting water to move in the direction of an osmotic gradient. Plays an essential role in renal water homeostasis. Could also be permeable to glycerol. The polypeptide is Aquaporin-2 (Macroscelides proboscideus (Short-eared elephant shrew)).